The chain runs to 519 residues: O-fucosyltransferase 31 (519 aa).

A helical; Signal-anchor for type II membrane protein membrane pass occupies residues 18-38 (ALAGVFVLLFPILYPNLFSPL). An N-linked (GlcNAc...) asparagine glycan is attached at N131. Position 302-304 (302-304 (HLR)) interacts with substrate. N373 and N474 each carry an N-linked (GlcNAc...) asparagine glycan.

This sequence belongs to the glycosyltransferase GT106 family.

The protein resides in the membrane. The protein operates within glycan metabolism. The sequence is that of O-fucosyltransferase 31 from Arabidopsis thaliana (Mouse-ear cress).